Consider the following 285-residue polypeptide: Bifunctional protein FolD (285 aa).

NADP(+) is bound by residues 165–167 and S190; that span reads GRS.

This sequence belongs to the tetrahydrofolate dehydrogenase/cyclohydrolase family. In terms of assembly, homodimer.

The enzyme catalyses (6R)-5,10-methylene-5,6,7,8-tetrahydrofolate + NADP(+) = (6R)-5,10-methenyltetrahydrofolate + NADPH. The catalysed reaction is (6R)-5,10-methenyltetrahydrofolate + H2O = (6R)-10-formyltetrahydrofolate + H(+). It functions in the pathway one-carbon metabolism; tetrahydrofolate interconversion. Its function is as follows. Catalyzes the oxidation of 5,10-methylenetetrahydrofolate to 5,10-methenyltetrahydrofolate and then the hydrolysis of 5,10-methenyltetrahydrofolate to 10-formyltetrahydrofolate. The polypeptide is Bifunctional protein FolD (Staphylococcus saprophyticus subsp. saprophyticus (strain ATCC 15305 / DSM 20229 / NCIMB 8711 / NCTC 7292 / S-41)).